The primary structure comprises 51 residues: MKRKAEVNEAIKNNNTPTESMDPNSYKTQYHDDPNFRGANRNSKQGQQGGM.

The segment at 1 to 51 is disordered; it reads MKRKAEVNEAIKNNNTPTESMDPNSYKTQYHDDPNFRGANRNSKQGQQGGM. 2 stretches are compositionally biased toward polar residues: residues 11 to 28 and 40 to 51; these read IKNNNTPTESMDPNSYKT and NRNSKQGQQGGM.

This is an uncharacterized protein from Bacillus subtilis (strain 168).